Here is a 1415-residue protein sequence, read N- to C-terminus: DNA-directed RNA polymerase subunit beta' (1415 aa).

Residues Cys72, Cys74, Cys87, and Cys90 each coordinate Zn(2+). The Mg(2+) site is built by Asp463, Asp465, and Asp467. Cys811, Cys885, Cys892, and Cys895 together coordinate Zn(2+).

This sequence belongs to the RNA polymerase beta' chain family. The RNAP catalytic core consists of 2 alpha, 1 beta, 1 beta' and 1 omega subunit. When a sigma factor is associated with the core the holoenzyme is formed, which can initiate transcription. Mg(2+) is required as a cofactor. The cofactor is Zn(2+).

It carries out the reaction RNA(n) + a ribonucleoside 5'-triphosphate = RNA(n+1) + diphosphate. Its function is as follows. DNA-dependent RNA polymerase catalyzes the transcription of DNA into RNA using the four ribonucleoside triphosphates as substrates. This Cereibacter sphaeroides (strain ATCC 17025 / ATH 2.4.3) (Rhodobacter sphaeroides) protein is DNA-directed RNA polymerase subunit beta'.